A 219-amino-acid polypeptide reads, in one-letter code: UPF0376 protein C36C5.12 (219 aa).

The Cytoplasmic segment spans residues 1–20 (MGRLDVKNSWIEFHQDEMTS). The chain crosses the membrane as a helical; Signal-anchor for type II membrane protein span at residues 21–43 (FLKLAIIGTVLLGVAHGANLTAA). Residues 44-219 (EKETYCELRS…VSKCDFSRLG (176 aa)) lie on the Extracellular side of the membrane. 2 N-linked (GlcNAc...) asparagine glycosylation sites follow: Asn104 and Asn204.

The protein belongs to the UPF0376 family.

It is found in the membrane. The polypeptide is UPF0376 protein C36C5.12 (Caenorhabditis elegans).